The sequence spans 724 residues: WW domain-containing protein ZK1098.1 (724 aa).

WW domains lie at 78–111 (PSVESDWSVHTNEKGTPYYHNRVTKQTSWIKPDV) and 123–156 (QPQQGQWKEFMSDDGKPYYYNTLTKKTQWVKPDG). 6 consecutive FF domains span residues 224–282 (KKRQ…WKVQ), 295–349 (IKKS…CIDF), 353–422 (RDKE…HIKQ), 442–502 (QRKV…FVED), 507–562 (YTED…LIEK), and 578–632 (KRRL…YKNG). A disordered region spans residues 626-724 (FNHYKNGTSG…KRKRRESEAD (99 aa)). Positions 630 to 639 (KNGTSGTTAG) are enriched in polar residues. Positions 645 to 657 (KKKKKKDKKKKNK) are enriched in basic residues. Positions 681–692 (SKEDRMDDEERG) are enriched in basic and acidic residues. The span at 693–703 (KKSKKSRKRSP) shows a compositional bias: basic residues.

The polypeptide is WW domain-containing protein ZK1098.1 (Caenorhabditis elegans).